A 139-amino-acid chain; its full sequence is D-ribose pyranase (139 aa).

Catalysis depends on His-20, which acts as the Proton donor. Substrate is bound by residues Asp-28, His-106, and 128–130 (YAN).

Belongs to the RbsD / FucU family. RbsD subfamily. In terms of assembly, homodecamer.

The protein localises to the cytoplasm. The catalysed reaction is beta-D-ribopyranose = beta-D-ribofuranose. It functions in the pathway carbohydrate metabolism; D-ribose degradation; D-ribose 5-phosphate from beta-D-ribopyranose: step 1/2. Its function is as follows. Catalyzes the interconversion of beta-pyran and beta-furan forms of D-ribose. The sequence is that of D-ribose pyranase from Edwardsiella ictaluri (strain 93-146).